Consider the following 279-residue polypeptide: Large ribosomal subunit protein uL2 (279 aa).

The interval 223 to 279 (VAMNPIDHPHGGGEGRTSGGRHPVTPWGKGTKGTRTRSNKSTDKYILRSRHAKKKGR) is disordered. Basic residues predominate over residues 269–279 (LRSRHAKKKGR).

It belongs to the universal ribosomal protein uL2 family. Part of the 50S ribosomal subunit. Forms a bridge to the 30S subunit in the 70S ribosome.

One of the primary rRNA binding proteins. Required for association of the 30S and 50S subunits to form the 70S ribosome, for tRNA binding and peptide bond formation. It has been suggested to have peptidyltransferase activity; this is somewhat controversial. Makes several contacts with the 16S rRNA in the 70S ribosome. The polypeptide is Large ribosomal subunit protein uL2 (Paracoccus denitrificans (strain Pd 1222)).